Here is a 520-residue protein sequence, read N- to C-terminus: GMP synthase [glutamine-hydrolyzing] (520 aa).

The Glutamine amidotransferase type-1 domain maps to 4–202 (KILILDFGSQ…VHDICGCGSD (199 aa)). The active-site Nucleophile is cysteine 81. Residues histidine 176 and glutamate 178 contribute to the active site. The 193-residue stretch at 203-395 (WNMPDYVEEA…LGLPHDMVYR (193 aa)) folds into the GMPS ATP-PPase domain. 230-236 (SGGVDSS) contacts ATP.

In terms of assembly, homodimer.

It carries out the reaction XMP + L-glutamine + ATP + H2O = GMP + L-glutamate + AMP + diphosphate + 2 H(+). The protein operates within purine metabolism; GMP biosynthesis; GMP from XMP (L-Gln route): step 1/1. Catalyzes the synthesis of GMP from XMP. In Thiobacillus denitrificans (strain ATCC 25259 / T1), this protein is GMP synthase [glutamine-hydrolyzing].